The sequence spans 419 residues: Gamma-glutamyl phosphate reductase (419 aa).

It belongs to the gamma-glutamyl phosphate reductase family.

It localises to the cytoplasm. It carries out the reaction L-glutamate 5-semialdehyde + phosphate + NADP(+) = L-glutamyl 5-phosphate + NADPH + H(+). Its pathway is amino-acid biosynthesis; L-proline biosynthesis; L-glutamate 5-semialdehyde from L-glutamate: step 2/2. Functionally, catalyzes the NADPH-dependent reduction of L-glutamate 5-phosphate into L-glutamate 5-semialdehyde and phosphate. The product spontaneously undergoes cyclization to form 1-pyrroline-5-carboxylate. The protein is Gamma-glutamyl phosphate reductase of Nitratidesulfovibrio vulgaris (strain DP4) (Desulfovibrio vulgaris).